The sequence spans 45 residues: AFAPSKVDSDRPNCSRYVQHLYMCTKELDPVCGTDGHTYGNRSIF.

The Kazal-like domain maps to 8-45; it reads DSDRPNCSRYVQHLYMCTKELDPVCGTDGHTYGNRSIF. N-linked (GlcNAc...) asparagine glycans are attached at residues N13 and N41.

In terms of processing, glycosylated.

The protein resides in the secreted. Its function is as follows. Inhibits calcium transport into spermatozoa. The polypeptide is Caltrin-like protein 1 (Cavia porcellus (Guinea pig)).